We begin with the raw amino-acid sequence, 221 residues long: Phosphoglycolate phosphatase (221 aa).

Asp7 serves as the catalytic Nucleophile. The Mg(2+) site is built by Asp7 and Asp9. Lys148 is a substrate binding site. Mg(2+) is bound by residues Asp171 and Asp175.

Belongs to the archaeal SPP-like hydrolase family. It depends on Mg(2+) as a cofactor.

It catalyses the reaction 2-phosphoglycolate + H2O = glycolate + phosphate. Catalyzes the dephosphorylation of 2-phosphoglycolate. This Methanothermobacter thermautotrophicus (strain ATCC 29096 / DSM 1053 / JCM 10044 / NBRC 100330 / Delta H) (Methanobacterium thermoautotrophicum) protein is Phosphoglycolate phosphatase.